Consider the following 197-residue polypeptide: Peptide deformylase (197 aa).

Cys106 and His148 together coordinate Fe cation. Glu149 is a catalytic residue. Residue His152 participates in Fe cation binding.

The protein belongs to the polypeptide deformylase family. It depends on Fe(2+) as a cofactor.

The catalysed reaction is N-terminal N-formyl-L-methionyl-[peptide] + H2O = N-terminal L-methionyl-[peptide] + formate. Functionally, removes the formyl group from the N-terminal Met of newly synthesized proteins. Requires at least a dipeptide for an efficient rate of reaction. N-terminal L-methionine is a prerequisite for activity but the enzyme has broad specificity at other positions. This chain is Peptide deformylase, found in Mycolicibacterium smegmatis (strain ATCC 700084 / mc(2)155) (Mycobacterium smegmatis).